A 70-amino-acid polypeptide reads, in one-letter code: Small ribosomal subunit protein bS21 (70 aa).

Belongs to the bacterial ribosomal protein bS21 family.

This chain is Small ribosomal subunit protein bS21, found in Helicobacter pylori (strain P12).